The sequence spans 354 residues: S-adenosylmethionine:tRNA ribosyltransferase-isomerase (354 aa).

This sequence belongs to the QueA family. Monomer.

Its subcellular location is the cytoplasm. The catalysed reaction is 7-aminomethyl-7-carbaguanosine(34) in tRNA + S-adenosyl-L-methionine = epoxyqueuosine(34) in tRNA + adenine + L-methionine + 2 H(+). It participates in tRNA modification; tRNA-queuosine biosynthesis. Transfers and isomerizes the ribose moiety from AdoMet to the 7-aminomethyl group of 7-deazaguanine (preQ1-tRNA) to give epoxyqueuosine (oQ-tRNA). This is S-adenosylmethionine:tRNA ribosyltransferase-isomerase from Dichelobacter nodosus (strain VCS1703A).